Consider the following 162-residue polypeptide: Ribosome maturation factor RimP (162 aa).

It belongs to the RimP family.

It localises to the cytoplasm. Its function is as follows. Required for maturation of 30S ribosomal subunits. This chain is Ribosome maturation factor RimP, found in Leptospira borgpetersenii serovar Hardjo-bovis (strain JB197).